Here is a 501-residue protein sequence, read N- to C-terminus: CaM kinase-like vesicle-associated protein (501 aa).

One can recognise a Protein kinase domain in the interval 24 to 286 (YDLGQVIKTE…AEEAISHEWI (263 aa)). Positions 327 to 501 (RAPEQSSTAA…AQESQREEAS (175 aa)) are disordered. Over residues 331 to 365 (QSSTAAAQSASATDTATPGAAGGATAAAASGATSA) the composition is skewed to low complexity. Residues 387-428 (TPATDGSATPATDGSVTPATDGSITPATDGSVTPATDRSATP) are compositionally biased toward polar residues. Thr-435 carries the phosphothreonine modification. A compositionally biased stretch (polar residues) spans 438 to 451 (TEESTVPTTQSSAM). Thr-459 carries the post-translational modification Phosphothreonine.

Belongs to the protein kinase superfamily. CAMK Ser/Thr protein kinase family. As to quaternary structure, interacts with calmodulin, in the presence of calcium. Requires Ca(2+) as cofactor.

The protein localises to the cell membrane. The protein resides in the cytoplasmic vesicle membrane. Its function is as follows. Does not appear to have detectable kinase activity. This Homo sapiens (Human) protein is CaM kinase-like vesicle-associated protein (CAMKV).